Consider the following 180-residue polypeptide: Adenine phosphoribosyltransferase (180 aa).

Belongs to the purine/pyrimidine phosphoribosyltransferase family. Homodimer.

It localises to the cytoplasm. The catalysed reaction is AMP + diphosphate = 5-phospho-alpha-D-ribose 1-diphosphate + adenine. Its pathway is purine metabolism; AMP biosynthesis via salvage pathway; AMP from adenine: step 1/1. Catalyzes a salvage reaction resulting in the formation of AMP, that is energically less costly than de novo synthesis. The sequence is that of Adenine phosphoribosyltransferase from Pasteurella multocida (strain Pm70).